We begin with the raw amino-acid sequence, 134 residues long: Citrolysin protein 2 (134 aa).

In Citrobacter freundii, this protein is Citrolysin protein 2.